Consider the following 623-residue polypeptide: Kelch repeat and BTB domain-containing protein 12 (623 aa).

The 68-residue stretch at 31–98 folds into the BTB domain; it reads IDVVLTAEGE…MYNAALEINN (68 aa). A BACK domain is found at 133 to 235; it reads CLGIYYFAKQ…NPSFLRQALR (103 aa). Kelch repeat units follow at residues 386–436, 437–492, 494–547, and 553–603; these read DLYV…TVNN, KLYV…VVNS, IYVL…STNA, and KLYV…LVAR.

The sequence is that of Kelch repeat and BTB domain-containing protein 12 (KBTBD12) from Homo sapiens (Human).